The sequence spans 114 residues: Flagellar transcriptional regulator FlhD (114 aa).

This sequence belongs to the FlhD family. Homodimer; disulfide-linked. Forms a heterohexamer composed of two FlhC and four FlhD subunits. Each FlhC binds a FlhD dimer, forming a heterotrimer, and a hexamer assembles by dimerization of two heterotrimers.

The protein localises to the cytoplasm. Functionally, functions in complex with FlhC as a master transcriptional regulator that regulates transcription of several flagellar and non-flagellar operons by binding to their promoter region. Activates expression of class 2 flagellar genes, including fliA, which is a flagellum-specific sigma factor that turns on the class 3 genes. Also regulates genes whose products function in a variety of physiological pathways. This chain is Flagellar transcriptional regulator FlhD, found in Wigglesworthia glossinidia brevipalpis.